A 422-amino-acid chain; its full sequence is Keratin, type I cytoskeletal 23 (422 aa).

A compositionally biased stretch (polar residues) spans 1 to 24 (MNSSHSFNQTYSASVHSLGSTRGR). Positions 1–35 (MNSSHSFNQTYSASVHSLGSTRGRQGSCHRAPSVH) are disordered. Residues 1-71 (MNSSHSFNQT…GRSSPLLGGN (71 aa)) are head. Residues 72 to 107 (GKATMQNLNDRLATYLEKVRALEEANSKLETRILRW) form a coil 1A region. The IF rod domain occupies 72-382 (GKATMQNLND…RLLEGDTEGT (311 aa)). Positions 108–125 (HQEREPSHRKDYSQYEEN) are linker 1. The segment at 126–217 (ISRLQEQIVD…KRHEQEMEEN (92 aa)) is coil 1B. A linker 12 region spans residues 218 to 240 (HLPSDFKVSVKVDTTPGEDLIKV). Residues 241-378 (LEDMRQEYEL…ATYRRLLEGD (138 aa)) form a coil 2 region. A rod-like helical tail region spans residues 379-422 (TEGTMDGSESRLKGSEASTIKAITQESVNGRIVLSQVNEIQKHI).

This sequence belongs to the intermediate filament family. Heterotetramer of two type I and two type II keratins.

The sequence is that of Keratin, type I cytoskeletal 23 (Krt23) from Mus musculus (Mouse).